The chain runs to 290 residues: Barley B recombinant-like protein C (290 aa).

2 disordered regions span residues 60-90 (PHHH…YGMM) and 102-183 (QPEP…RKNI). Residues 104-116 (EPQPQLQHPPSPP) show a composition bias toward pro residues. Over residues 138–158 (PPKKRQQGRQPKVLRPKKPKK) the composition is skewed to basic residues.

Belongs to the BBR/BPC family.

The protein localises to the nucleus. Transcriptional regulator that specifically binds to GA-rich elements (GAGA-repeats) present in regulatory sequences of genes involved in developmental processes. In Oryza sativa subsp. japonica (Rice), this protein is Barley B recombinant-like protein C.